A 465-amino-acid chain; its full sequence is ATP synthase subunit beta (465 aa).

Glycine 148–threonine 155 provides a ligand contact to ATP.

This sequence belongs to the ATPase alpha/beta chains family. F-type ATPases have 2 components, CF(1) - the catalytic core - and CF(0) - the membrane proton channel. CF(1) has five subunits: alpha(3), beta(3), gamma(1), delta(1), epsilon(1). CF(0) has three main subunits: a(1), b(2) and c(9-12). The alpha and beta chains form an alternating ring which encloses part of the gamma chain. CF(1) is attached to CF(0) by a central stalk formed by the gamma and epsilon chains, while a peripheral stalk is formed by the delta and b chains.

It is found in the cell inner membrane. It carries out the reaction ATP + H2O + 4 H(+)(in) = ADP + phosphate + 5 H(+)(out). Its function is as follows. Produces ATP from ADP in the presence of a proton gradient across the membrane. The catalytic sites are hosted primarily by the beta subunits. In Neisseria meningitidis serogroup C (strain 053442), this protein is ATP synthase subunit beta.